Reading from the N-terminus, the 307-residue chain is Ribosomal RNA small subunit methyltransferase H (307 aa).

Residues 38–40 (GGH), Asp-58, Phe-82, Asp-99, and Gln-106 contribute to the S-adenosyl-L-methionine site.

This sequence belongs to the methyltransferase superfamily. RsmH family.

The protein localises to the cytoplasm. It carries out the reaction cytidine(1402) in 16S rRNA + S-adenosyl-L-methionine = N(4)-methylcytidine(1402) in 16S rRNA + S-adenosyl-L-homocysteine + H(+). In terms of biological role, specifically methylates the N4 position of cytidine in position 1402 (C1402) of 16S rRNA. This is Ribosomal RNA small subunit methyltransferase H from Variovorax paradoxus (strain S110).